Reading from the N-terminus, the 252-residue chain is uncharacterized protein (252 aa).

This is an uncharacterized protein from Rickettsia prowazekii (strain Madrid E).